Consider the following 275-residue polypeptide: Probable siderophore transport system ATP-binding protein YusV (275 aa).

The ABC transporter domain maps to 6-242 (ISTETLSLGY…DLVQNVFSMN (237 aa)). 38–45 (GSNGCGKS) is an ATP binding site.

This sequence belongs to the ABC transporter superfamily. As to quaternary structure, the iron-hydroxamate siderophore complex is composed of one ATP-binding protein (YusV), two transmembrane proteins (YfiZ and YfhA) and a solute-binding protein (YfiY); the catechoplate siderophore complex is composed of one ATP-binding protein (YusV), two transmembrane proteins (FeuB and FeuC) and a solute-binding protein (FeuA).

It is found in the cell membrane. Provides the ATPase subunit for at least 2 ABC transporter complexes; YfiYZ/YfhA/YusV involved in import of the iron-hydroxamate siderophores schizokinen, arthrobactin and corprogen, and FeuABC/YusV involved in import of the catecholate siderophores bacillibactin and enterobactin. Probably responsible for energy coupling to the transport system. This chain is Probable siderophore transport system ATP-binding protein YusV (yusV), found in Bacillus subtilis (strain 168).